A 127-amino-acid chain; its full sequence is Glycine cleavage system H protein (127 aa).

Residues 24 to 105 (TALVGITDFA…YGEGWMVKMK (82 aa)) enclose the Lipoyl-binding domain. Lys-65 carries the post-translational modification N6-lipoyllysine.

This sequence belongs to the GcvH family. The glycine cleavage system is composed of four proteins: P, T, L and H. (R)-lipoate serves as cofactor.

Its function is as follows. The glycine cleavage system catalyzes the degradation of glycine. The H protein shuttles the methylamine group of glycine from the P protein to the T protein. The sequence is that of Glycine cleavage system H protein from Chlorobium phaeovibrioides (strain DSM 265 / 1930) (Prosthecochloris vibrioformis (strain DSM 265)).